Consider the following 212-residue polypeptide: Methylthioribulose-1-phosphate dehydratase (212 aa).

Residues histidine 97 and histidine 99 each contribute to the Zn(2+) site.

Belongs to the aldolase class II family. MtnB subfamily. As to quaternary structure, homotetramer. Requires Zn(2+) as cofactor.

It carries out the reaction 5-(methylsulfanyl)-D-ribulose 1-phosphate = 5-methylsulfanyl-2,3-dioxopentyl phosphate + H2O. It participates in amino-acid biosynthesis; L-methionine biosynthesis via salvage pathway; L-methionine from S-methyl-5-thio-alpha-D-ribose 1-phosphate: step 2/6. Catalyzes the dehydration of methylthioribulose-1-phosphate (MTRu-1-P) into 2,3-diketo-5-methylthiopentyl-1-phosphate (DK-MTP-1-P). The sequence is that of Methylthioribulose-1-phosphate dehydratase from Bacillus thuringiensis subsp. konkukian (strain 97-27).